Consider the following 377-residue polypeptide: tRNA-specific 2-thiouridylase MnmA (377 aa).

ATP-binding positions include A9–S16 and L35. C105 (nucleophile) is an active-site residue. A disulfide bridge connects residues C105 and C201. G129 is an ATP binding site. Residues K151–Q153 form an interaction with tRNA region. C201 functions as the Cysteine persulfide intermediate in the catalytic mechanism. An interaction with tRNA region spans residues R307–Y308.

Belongs to the MnmA/TRMU family.

It is found in the cytoplasm. It catalyses the reaction S-sulfanyl-L-cysteinyl-[protein] + uridine(34) in tRNA + AH2 + ATP = 2-thiouridine(34) in tRNA + L-cysteinyl-[protein] + A + AMP + diphosphate + H(+). Its function is as follows. Catalyzes the 2-thiolation of uridine at the wobble position (U34) of tRNA, leading to the formation of s(2)U34. This chain is tRNA-specific 2-thiouridylase MnmA, found in Leptospira borgpetersenii serovar Hardjo-bovis (strain JB197).